Here is a 335-residue protein sequence, read N- to C-terminus: Holliday junction branch migration complex subunit RuvB (335 aa).

The interval 1-181 (MTRILDNDLI…FGITGHMEYY (181 aa)) is large ATPase domain (RuvB-L). Residues Leu20, Arg21, Gly62, Lys65, Thr66, Thr67, 128 to 130 (EDF), Arg171, Tyr181, and Arg218 each bind ATP. Thr66 contacts Mg(2+). Residues 182 to 252 (QTADLTEIVE…ITDKALTMLD (71 aa)) form a small ATPAse domain (RuvB-S) region. A head domain (RuvB-H) region spans residues 255-335 (QEGLDYVDQK…GYPYEKTIKT (81 aa)). Residues Arg291, Arg310, Arg312, and Arg315 each coordinate DNA.

This sequence belongs to the RuvB family. In terms of assembly, homohexamer. Forms an RuvA(8)-RuvB(12)-Holliday junction (HJ) complex. HJ DNA is sandwiched between 2 RuvA tetramers; dsDNA enters through RuvA and exits via RuvB. An RuvB hexamer assembles on each DNA strand where it exits the tetramer. Each RuvB hexamer is contacted by two RuvA subunits (via domain III) on 2 adjacent RuvB subunits; this complex drives branch migration. In the full resolvosome a probable DNA-RuvA(4)-RuvB(12)-RuvC(2) complex forms which resolves the HJ.

The protein localises to the cytoplasm. It carries out the reaction ATP + H2O = ADP + phosphate + H(+). In terms of biological role, the RuvA-RuvB-RuvC complex processes Holliday junction (HJ) DNA during genetic recombination and DNA repair, while the RuvA-RuvB complex plays an important role in the rescue of blocked DNA replication forks via replication fork reversal (RFR). RuvA specifically binds to HJ cruciform DNA, conferring on it an open structure. The RuvB hexamer acts as an ATP-dependent pump, pulling dsDNA into and through the RuvAB complex. RuvB forms 2 homohexamers on either side of HJ DNA bound by 1 or 2 RuvA tetramers; 4 subunits per hexamer contact DNA at a time. Coordinated motions by a converter formed by DNA-disengaged RuvB subunits stimulates ATP hydrolysis and nucleotide exchange. Immobilization of the converter enables RuvB to convert the ATP-contained energy into a lever motion, pulling 2 nucleotides of DNA out of the RuvA tetramer per ATP hydrolyzed, thus driving DNA branch migration. The RuvB motors rotate together with the DNA substrate, which together with the progressing nucleotide cycle form the mechanistic basis for DNA recombination by continuous HJ branch migration. Branch migration allows RuvC to scan DNA until it finds its consensus sequence, where it cleaves and resolves cruciform DNA. The protein is Holliday junction branch migration complex subunit RuvB of Streptococcus equi subsp. equi (strain 4047).